We begin with the raw amino-acid sequence, 515 residues long: Bifunctional pantoate ligase/cytidylate kinase (515 aa).

The interval 1-279 is pantoate--beta-alanine ligase; that stretch reads MKVVETVARL…VGSTRLIDNV (279 aa). 31 to 38 is an ATP binding site; that stretch reads MGALHEGH. Catalysis depends on H38, which acts as the Proton donor. Q62 provides a ligand contact to (R)-pantoate. Q62 is a beta-alanine binding site. 149 to 152 serves as a coordination point for ATP; sequence GQKD. A (R)-pantoate-binding site is contributed by Q155. Residues V178 and 186-189 contribute to the ATP site; that span reads LSSR. The tract at residues 280–515 is cytidylate kinase; that stretch reads VLGQHHERRP…LYRDKVGGSV (236 aa).

This sequence in the N-terminal section; belongs to the pantothenate synthetase family. It in the C-terminal section; belongs to the cytidylate kinase family. Type 1 subfamily.

The protein localises to the cytoplasm. It catalyses the reaction (R)-pantoate + beta-alanine + ATP = (R)-pantothenate + AMP + diphosphate + H(+). The enzyme catalyses CMP + ATP = CDP + ADP. It carries out the reaction dCMP + ATP = dCDP + ADP. It participates in cofactor biosynthesis; (R)-pantothenate biosynthesis; (R)-pantothenate from (R)-pantoate and beta-alanine: step 1/1. Its function is as follows. Catalyzes the condensation of pantoate with beta-alanine in an ATP-dependent reaction via a pantoyl-adenylate intermediate. Catalyzes the transfer of a phosphate group from ATP to either CMP or dCMP to form CDP or dCDP and ADP, respectively. This is Bifunctional pantoate ligase/cytidylate kinase from Gloeobacter violaceus (strain ATCC 29082 / PCC 7421).